The primary structure comprises 548 residues: Eukaryotic translation initiation factor 3 subunit D (548 aa).

Residue Lys53 is modified to N6-acetyllysine. Ser161 is subject to Phosphoserine. Positions 285–299 are RNA gate; sequence DFDLPTVSETANEPP. Disordered stretches follow at residues 288–309 and 523–548; these read LPTVSETANEPPQDEGNSFNSP and PDGTFSSDEDEEEEEEEEEEEEEEET. The segment covering 291–309 has biased composition (polar residues); it reads VSETANEPPQDEGNSFNSP. Phosphoserine is present on residues Ser528 and Ser529. The span at 529–548 shows a compositional bias: acidic residues; it reads SDEDEEEEEEEEEEEEEEET.

The protein belongs to the eIF-3 subunit D family. As to quaternary structure, component of the eukaryotic translation initiation factor 3 (eIF-3) complex, which is composed of 13 subunits: EIF3A, EIF3B, EIF3C, EIF3D, EIF3E, EIF3F, EIF3G, EIF3H, EIF3I, EIF3J, EIF3K, EIF3L and EIF3M. The eIF-3 complex appears to include 3 stable modules: module A is composed of EIF3A, EIF3B, EIF3G and EIF3I; module B is composed of EIF3F, EIF3H, and EIF3M; and module C is composed of EIF3C, EIF3D, EIF3E, EIF3K and EIF3L. EIF3C of module C binds EIF3B of module A and EIF3H of module B, thereby linking the three modules. EIF3J is a labile subunit that binds to the eIF-3 complex via EIF3B. The eIF-3 complex interacts with RPS6KB1 under conditions of nutrient depletion. Mitogenic stimulation leads to binding and activation of a complex composed of MTOR and RPTOR, leading to phosphorylation and release of RPS6KB1 and binding of EIF4B to eIF-3.

Its subcellular location is the cytoplasm. In terms of biological role, mRNA cap-binding component of the eukaryotic translation initiation factor 3 (eIF-3) complex, a complex required for several steps in the initiation of protein synthesis of a specialized repertoire of mRNAs. The eIF-3 complex associates with the 40S ribosome and facilitates the recruitment of eIF-1, eIF-1A, eIF-2:GTP:methionyl-tRNAi and eIF-5 to form the 43S pre-initiation complex (43S PIC). The eIF-3 complex stimulates mRNA recruitment to the 43S PIC and scanning of the mRNA for AUG recognition. The eIF-3 complex is also required for disassembly and recycling of post-termination ribosomal complexes and subsequently prevents premature joining of the 40S and 60S ribosomal subunits prior to initiation. The eIF-3 complex specifically targets and initiates translation of a subset of mRNAs involved in cell proliferation, including cell cycling, differentiation and apoptosis, and uses different modes of RNA stem-loop binding to exert either translational activation or repression. In the eIF-3 complex, EIF3D specifically recognizes and binds the 7-methylguanosine cap of a subset of mRNAs. This is Eukaryotic translation initiation factor 3 subunit D from Pongo abelii (Sumatran orangutan).